The sequence spans 213 residues: GTP-binding protein yptV4 (213 aa).

Residue 13-21 participates in GTP binding; it reads GDTGVGKSC. The Effector region signature appears at 35-43; sequence HDLTIGVEF. Residues 61 to 65, 119 to 122, and 149 to 151 each bind GTP; these read DTAGQ, NKCD, and SAR. The interval 194-213 is disordered; sequence AGPQAAKPGEGDARKSSSCC. Positions 202–213 are enriched in basic and acidic residues; that stretch reads GEGDARKSSSCC. 2 S-geranylgeranyl cysteine lipidation sites follow: C212 and C213.

Belongs to the small GTPase superfamily. Rab family.

The protein localises to the cell membrane. Its function is as follows. Protein transport. Probably involved in vesicular traffic. The sequence is that of GTP-binding protein yptV4 (YPTV4) from Volvox carteri (Green alga).